A 112-amino-acid polypeptide reads, in one-letter code: uncharacterized protein (112 aa).

The protein to M.jannaschii MJ1244 and M.thermoautotrophicum MTH1110.

This is an uncharacterized protein from Methanocaldococcus jannaschii (strain ATCC 43067 / DSM 2661 / JAL-1 / JCM 10045 / NBRC 100440) (Methanococcus jannaschii).